Consider the following 287-residue polypeptide: Undecaprenyl-diphosphatase (287 aa).

6 helical membrane passes run 50–70 (PGVS…IAYF), 99–119 (IAMA…KLFW), 128–148 (LRSV…LAVA), 206–226 (FLLG…DALA), 231–251 (AGPL…WLAI), and 263–283 (TWLF…WWSI).

The protein belongs to the UppP family.

The protein localises to the cell inner membrane. It carries out the reaction di-trans,octa-cis-undecaprenyl diphosphate + H2O = di-trans,octa-cis-undecaprenyl phosphate + phosphate + H(+). Functionally, catalyzes the dephosphorylation of undecaprenyl diphosphate (UPP). Confers resistance to bacitracin. The polypeptide is Undecaprenyl-diphosphatase (Parasynechococcus marenigrum (strain WH8102)).